Consider the following 228-residue polypeptide: Probable septum site-determining protein MinC (228 aa).

It belongs to the MinC family. Interacts with MinD and FtsZ.

In terms of biological role, cell division inhibitor that blocks the formation of polar Z ring septums. Rapidly oscillates between the poles of the cell to destabilize FtsZ filaments that have formed before they mature into polar Z rings. Prevents FtsZ polymerization. The sequence is that of Probable septum site-determining protein MinC from Bacillus cereus (strain B4264).